The sequence spans 337 residues: tRNA N6-adenosine threonylcarbamoyltransferase (337 aa).

Residues His111 and His115 each coordinate Fe cation. Substrate is bound by residues 134–138, Asp167, Gly180, and Asn272; that span reads LVSGG. Asp300 serves as a coordination point for Fe cation.

It belongs to the KAE1 / TsaD family. It depends on Fe(2+) as a cofactor.

It localises to the cytoplasm. The enzyme catalyses L-threonylcarbamoyladenylate + adenosine(37) in tRNA = N(6)-L-threonylcarbamoyladenosine(37) in tRNA + AMP + H(+). In terms of biological role, required for the formation of a threonylcarbamoyl group on adenosine at position 37 (t(6)A37) in tRNAs that read codons beginning with adenine. Is involved in the transfer of the threonylcarbamoyl moiety of threonylcarbamoyl-AMP (TC-AMP) to the N6 group of A37, together with TsaE and TsaB. TsaD likely plays a direct catalytic role in this reaction. The polypeptide is tRNA N6-adenosine threonylcarbamoyltransferase (Methylococcus capsulatus (strain ATCC 33009 / NCIMB 11132 / Bath)).